Consider the following 208-residue polypeptide: Imidazoleglycerol-phosphate dehydratase (208 aa).

This sequence belongs to the imidazoleglycerol-phosphate dehydratase family.

The protein localises to the cytoplasm. It carries out the reaction D-erythro-1-(imidazol-4-yl)glycerol 3-phosphate = 3-(imidazol-4-yl)-2-oxopropyl phosphate + H2O. It functions in the pathway amino-acid biosynthesis; L-histidine biosynthesis; L-histidine from 5-phospho-alpha-D-ribose 1-diphosphate: step 6/9. This Arthrobacter sp. (strain FB24) protein is Imidazoleglycerol-phosphate dehydratase.